The chain runs to 196 residues: Imidazoleglycerol-phosphate dehydratase (196 aa).

It belongs to the imidazoleglycerol-phosphate dehydratase family.

It is found in the cytoplasm. The enzyme catalyses D-erythro-1-(imidazol-4-yl)glycerol 3-phosphate = 3-(imidazol-4-yl)-2-oxopropyl phosphate + H2O. The protein operates within amino-acid biosynthesis; L-histidine biosynthesis; L-histidine from 5-phospho-alpha-D-ribose 1-diphosphate: step 6/9. The sequence is that of Imidazoleglycerol-phosphate dehydratase from Moorella thermoacetica (strain ATCC 39073 / JCM 9320).